The following is a 371-amino-acid chain: 3-methyl-D-ornithine--L-lysine ligase (371 aa).

Lys18 is a binding site for ATP. Leu19–Gln20 is a binding site for L-lysine. ATP-binding positions include Asp39, Asn57–Ile58, and Glu80–Asn81. Glu80 contributes to the L-lysine binding site. In terms of domain architecture, ATP-grasp spans Glu93–Asn277. ADP-binding positions include Lys112, Lys139, Ser146, and Glu168 to Val171. Residues Ser177 to Glu179 and Asp233 contribute to the D-ornithine site. Mg(2+)-binding residues include Glu235, Glu247, and Asp249. Glu247 provides a ligand contact to ADP. Residues Arg251–Thr256 and Glu310 each bind D-ornithine. L-lysine contacts are provided by Ser254 and Glu310.

This sequence belongs to the PylC family. The cofactor is Mg(2+).

The enzyme catalyses (3R)-3-methyl-D-ornithine + L-lysine + ATP = (3R)-3-methyl-D-ornithyl-N(6)-L-lysine + ADP + phosphate + H(+). Its pathway is amino-acid biosynthesis; L-pyrrolysine biosynthesis. In terms of biological role, is required for the biosynthesis of pyrrolysine. Catalyzes the ATP-dependent ligation between (3R)-3-methyl-D-ornithine and L-lysine, leading to (3R)-3-methyl-D-ornithyl-N6-L-lysine. Is also involved in the synthesis of pyrroline-carboxy-lysine (Pcl), a demethylated form of pyrrolysine that is generated by the pyrrolysine biosynthetic enzymes when the growth media is supplemented with D-ornithine. The polypeptide is 3-methyl-D-ornithine--L-lysine ligase (Methanosarcina mazei (strain ATCC BAA-159 / DSM 3647 / Goe1 / Go1 / JCM 11833 / OCM 88) (Methanosarcina frisia)).